The chain runs to 206 residues: CASP-like protein 1F1 (206 aa).

At 1-43 (MCFQFSILYTCYLAHFGVFPRKYLVMAGIEAKFQQNPPLGTHK) the chain is on the cytoplasmic side. A helical membrane pass occupies residues 44-64 (LFLGAHICLRILTVTATLTAA). At 65-92 (WMMITSKQTVEVYGIQVEAKYSYSSAFK) the chain is on the extracellular side. Residues 93 to 113 (FFSYANAIACGCSVLTLFPAF) traverse the membrane as a helical segment. Topologically, residues 114–124 (SLFYRGSTPMK) are cytoplasmic. A helical membrane pass occupies residues 125-145 (FFFLFLHDLCMMSLVLAGCAA). At 146 to 177 (ATAIGYVGRYGNNHAGWMAICDQFDEYCNRIR) the chain is on the extracellular side. A helical transmembrane segment spans residues 178–198 (LSLMFSYLAFVFILMLTIMSA). The Cytoplasmic segment spans residues 199 to 206 (NKSREIRV).

The protein belongs to the Casparian strip membrane proteins (CASP) family. As to quaternary structure, homodimer and heterodimers.

Its subcellular location is the cell membrane. The sequence is that of CASP-like protein 1F1 from Vitis vinifera (Grape).